The primary structure comprises 446 residues: Exodeoxyribonuclease 7 large subunit (446 aa).

The protein belongs to the XseA family. As to quaternary structure, heterooligomer composed of large and small subunits.

The protein localises to the cytoplasm. The enzyme catalyses Exonucleolytic cleavage in either 5'- to 3'- or 3'- to 5'-direction to yield nucleoside 5'-phosphates.. Bidirectionally degrades single-stranded DNA into large acid-insoluble oligonucleotides, which are then degraded further into small acid-soluble oligonucleotides. The polypeptide is Exodeoxyribonuclease 7 large subunit (Streptococcus pneumoniae serotype 4 (strain ATCC BAA-334 / TIGR4)).